A 131-amino-acid polypeptide reads, in one-letter code: Profilin (131 aa).

It belongs to the profilin family. Occurs in many kinds of cells as a complex with monomeric actin in a 1:1 ratio.

It is found in the cytoplasm. The protein localises to the cytoskeleton. Binds to actin and affects the structure of the cytoskeleton. At high concentrations, profilin prevents the polymerization of actin, whereas it enhances it at low concentrations. By binding to PIP2, it inhibits the formation of IP3 and DG. This is Profilin from Cucumis melo (Muskmelon).